The sequence spans 152 residues: MKCPFCGHADTQVVDSRVSEDGASIRRRRRCLECDKRFTTFETAEVRMPQVVKQDGHRAEFSDAKLRTGFTRALHKRPVPTPLVDEAVGRVKQKLLQLGEREVSARQIGEMVMSELARLDKVAYVRFASVYRSFQDVAEFSDAIREITHDKD.

A zinc finger lies at 3 to 34; the sequence is CPFCGHADTQVVDSRVSEDGASIRRRRRCLEC. Residues 49-139 enclose the ATP-cone domain; the sequence is PQVVKQDGHR…VYRSFQDVAE (91 aa).

This sequence belongs to the NrdR family. The cofactor is Zn(2+).

Its function is as follows. Negatively regulates transcription of bacterial ribonucleotide reductase nrd genes and operons by binding to NrdR-boxes. The chain is Transcriptional repressor NrdR from Laribacter hongkongensis (strain HLHK9).